The sequence spans 210 residues: Casparian strip membrane protein 1 (210 aa).

The tract at residues 1–25 (MEKSEATTIDVAETSRESKGKAPLL) is disordered. Residues 1–48 (MEKSEATTIDVAETSRESKGKAPLLRDPPAWVPAAVERQRAAPAYKRG) lie on the Cytoplasmic side of the membrane. Residues 49–69 (VAIFDLILRISAATAALAATI) traverse the membrane as a helical segment. The Extracellular segment spans residues 70 to 98 (TMGTTEQTLPFFTQFFQFQASYDDLPTFT). The helical transmembrane segment at 99–119 (FFVIAMSIVTGYLVLSVPFSI) threads the bilayer. Residues 120–138 (VCIARPVAAAPRLLLILCD) are Cytoplasmic-facing. The chain crosses the membrane as a helical span at residues 139–159 (TLAVTLNTSAAGASAAIVYLA). The Extracellular segment spans residues 160–183 (HNGNSDANWLAICQQFNDFCQRTS). A helical membrane pass occupies residues 184-204 (GAVVASFVAVVLLIFLVVLSA). The Cytoplasmic portion of the chain corresponds to 205 to 210 (SALKKH).

The protein belongs to the Casparian strip membrane proteins (CASP) family. As to quaternary structure, homodimer and heterodimers.

Its subcellular location is the cell membrane. In terms of biological role, regulates membrane-cell wall junctions and localized cell wall deposition. Required for establishment of the Casparian strip membrane domain (CSD) and the subsequent formation of Casparian strips, a cell wall modification of the root endodermis that determines an apoplastic barrier between the intraorganismal apoplasm and the extraorganismal apoplasm and prevents lateral diffusion. The protein is Casparian strip membrane protein 1 of Erythranthe guttata (Yellow monkey flower).